The sequence spans 237 residues: Small ribosomal subunit protein uS3 (237 aa).

The region spanning 39–107 (IRAYLMEELK…ETHLNIVEVR (69 aa)) is the KH type-2 domain. Residues 213–237 (MASERRATESDNQGGGGRDRRRENA) are disordered.

It belongs to the universal ribosomal protein uS3 family. As to quaternary structure, part of the 30S ribosomal subunit. Forms a tight complex with proteins S10 and S14.

Its function is as follows. Binds the lower part of the 30S subunit head. Binds mRNA in the 70S ribosome, positioning it for translation. This chain is Small ribosomal subunit protein uS3, found in Sinorhizobium fredii (strain NBRC 101917 / NGR234).